Reading from the N-terminus, the 273-residue chain is 4-hydroxy-tetrahydrodipicolinate reductase (273 aa).

NAD(+) is bound by residues G12–M17 and E38. R39 is a binding site for NADP(+). Residues G102–T104 and A126–F129 contribute to the NAD(+) site. H159 serves as the catalytic Proton donor/acceptor. H160 serves as a coordination point for (S)-2,3,4,5-tetrahydrodipicolinate. K163 serves as the catalytic Proton donor. Residue G169–T170 coordinates (S)-2,3,4,5-tetrahydrodipicolinate.

The protein belongs to the DapB family. Homotetramer.

The protein localises to the cytoplasm. It carries out the reaction (S)-2,3,4,5-tetrahydrodipicolinate + NAD(+) + H2O = (2S,4S)-4-hydroxy-2,3,4,5-tetrahydrodipicolinate + NADH + H(+). The catalysed reaction is (S)-2,3,4,5-tetrahydrodipicolinate + NADP(+) + H2O = (2S,4S)-4-hydroxy-2,3,4,5-tetrahydrodipicolinate + NADPH + H(+). It participates in amino-acid biosynthesis; L-lysine biosynthesis via DAP pathway; (S)-tetrahydrodipicolinate from L-aspartate: step 4/4. In terms of biological role, catalyzes the conversion of 4-hydroxy-tetrahydrodipicolinate (HTPA) to tetrahydrodipicolinate. This is 4-hydroxy-tetrahydrodipicolinate reductase from Escherichia coli O157:H7.